A 31-amino-acid chain; its full sequence is Cytochrome b6-f complex subunit 6 (31 aa).

Residues 4–24 (ITSYFGFLLAALTITSALFIG) traverse the membrane as a helical segment.

This sequence belongs to the PetL family. As to quaternary structure, the 4 large subunits of the cytochrome b6-f complex are cytochrome b6, subunit IV (17 kDa polypeptide, PetD), cytochrome f and the Rieske protein, while the 4 small subunits are PetG, PetL, PetM and PetN. The complex functions as a dimer.

It is found in the plastid. It localises to the chloroplast thylakoid membrane. In terms of biological role, component of the cytochrome b6-f complex, which mediates electron transfer between photosystem II (PSII) and photosystem I (PSI), cyclic electron flow around PSI, and state transitions. PetL is important for photoautotrophic growth as well as for electron transfer efficiency and stability of the cytochrome b6-f complex. This is Cytochrome b6-f complex subunit 6 from Solanum tuberosum (Potato).